A 397-amino-acid polypeptide reads, in one-letter code: Acetate kinase (397 aa).

Asparagine 7 contributes to the Mg(2+) binding site. Position 14 (lysine 14) interacts with ATP. Arginine 91 is a substrate binding site. Aspartate 148 acts as the Proton donor/acceptor in catalysis. ATP-binding positions include 208-212, 283-285, and 331-335; these read HIGNG, DMR, and GVGEN. Glutamate 384 contacts Mg(2+).

Belongs to the acetokinase family. In terms of assembly, homodimer. Requires Mg(2+) as cofactor. Mn(2+) is required as a cofactor.

The protein localises to the cytoplasm. The catalysed reaction is acetate + ATP = acetyl phosphate + ADP. It functions in the pathway metabolic intermediate biosynthesis; acetyl-CoA biosynthesis; acetyl-CoA from acetate: step 1/2. Functionally, catalyzes the formation of acetyl phosphate from acetate and ATP. Can also catalyze the reverse reaction. The chain is Acetate kinase from Azobacteroides pseudotrichonymphae genomovar. CFP2.